Reading from the N-terminus, the 506-residue chain is Catalase (506 aa).

Residues histidine 73 and asparagine 146 contribute to the active site. Residue tyrosine 356 participates in heme binding. The Microbody targeting signal motif lies at 504-506 (SKF).

This sequence belongs to the catalase family. In terms of assembly, homotetramer. Requires heme as cofactor.

The protein resides in the peroxisome matrix. The catalysed reaction is 2 H2O2 = O2 + 2 H2O. Functionally, catalyzes the degradation of hydrogen peroxide (H(2)O(2)) generated by peroxisomal oxidases to water and oxygen, thereby protecting cells from the toxic effects of hydrogen peroxide. This chain is Catalase (Cat), found in Drosophila melanogaster (Fruit fly).